Reading from the N-terminus, the 268-residue chain is Small ribosomal subunit protein uS2 (268 aa).

Belongs to the universal ribosomal protein uS2 family.

In Coprothermobacter proteolyticus (strain ATCC 35245 / DSM 5265 / OCM 4 / BT), this protein is Small ribosomal subunit protein uS2.